Consider the following 502-residue polypeptide: Alpha-globin transcription factor CP2 (502 aa).

The 240-residue stretch at 61-300 folds into the Grh/CP2 DB domain; sequence ENKILPFQYV…SPGFNSSHSS (240 aa). A DNA-binding region spans residues 133-395; the sequence is EHQQLEGWRW…VRPRLTIYVC (263 aa). Disordered regions lie at residues 238–268 and 294–325; these read FKPKGADRKQKTDREKMEKRTPHEKEKYQPS and FNSSHSSFSLGEGNGSPNHQPEPPPPVTDNLL. Residues 241–265 are compositionally biased toward basic and acidic residues; it reads KGADRKQKTDREKMEKRTPHEKEKY. Phosphoserine is present on Ser-353.

This sequence belongs to the grh/CP2 family. CP2 subfamily. Binds to DNA as a dimer, isoform 3 does not bind to DNA or affect the binding of isoform 1 to DNA. Interacts with UBP1 and PIAS1, and is probably part of a complex containing TFCP2, UBP1 and PIAS1. Component of the SSP (stage selector protein) complex, which appears to be a heteromer of TFCP2 and 2 copies of NFE4. Ubiquitous. Expressed in brain, ovary, kidney, thymus, spleen, liver, adrenal, heart and lung (at protein level).

It is found in the nucleus. In terms of biological role, binds a variety of cellular and viral promoters including fibrinogen, alpha-globin, SV40 and HIV-1 promoters. Activation of the alpha-globin promoter in erythroid cells is via synergistic interaction with UBP1. Functions as part of the SSP (stage selector protein) complex. Facilitates the interaction of the gamma-globin genes with enhancer elements contained in the locus control region in fetal erythroid cells. Interacts by binding to the stage selector element (SSE) in the proximal gamma-globin promoter. This is Alpha-globin transcription factor CP2 (TFCP2) from Homo sapiens (Human).